The following is a 76-amino-acid chain: Ovarian cancer-related protein 1 (76 aa).

The sequence is that of Ovarian cancer-related protein 1 (OCR1) from Homo sapiens (Human).